Reading from the N-terminus, the 33-residue chain is Potassium channel toxin alpha-KTx 10.5 (33 aa).

3 disulfide bridges follow: Cys-4-Cys-23, Cys-9-Cys-28, and Cys-13-Cys-30.

In terms of tissue distribution, expressed by the venom gland.

The protein localises to the secreted. In terms of biological role, inhibits less than 5% of human voltage-gated potassium (Kv) channel Kv1.3/KCNA3 currents at 100nM concentration and does not block human Kv1.1/KCNA1 and Kv1.2/KCNA2 currents. The protein is Potassium channel toxin alpha-KTx 10.5 of Centruroides bonito (Scorpion).